The primary structure comprises 392 residues: Copper-containing nitrite reductase (392 aa).

A signal peptide spans 1-18; sequence MKRQALAAMIASLFALAA. The N-palmitoyl cysteine moiety is linked to residue C19. C19 carries S-diacylglycerol cysteine lipidation. The disordered stretch occupies residues 30–49; it reads ETPAASAEAASSAAQATAET. Plastocyanin-like domains follow at residues 101–195 and 245–346; these read WTFD…ILVE and GHVG…LKVE. 6 residues coordinate Cu cation: H134, H139, H174, C175, H183, and M188. H139 contacts substrate. H280 is a binding site for substrate. Cu cation is bound at residue H329. The segment at 367–392 is disordered; sequence GAASAPAASAPAASAPAASASEKSVY. A run of 4 repeats spans residues 368 to 372, 373 to 377, 378 to 382, and 383 to 387. Positions 368–387 are 4 X 5 AA tandem repeats of A-A-S-A-P; the sequence is AASAPAASAPAASAPAASAS.

The protein belongs to the multicopper oxidase family. Homotrimer. Cu(+) serves as cofactor. The cofactor is Cu(2+). In terms of processing, palmitoylated.

The protein resides in the cell outer membrane. It carries out the reaction nitric oxide + Fe(III)-[cytochrome c] + H2O = Fe(II)-[cytochrome c] + nitrite + 2 H(+). Functionally, catalyzes the reduction of nitrite to nitric oxide (NO), probably with azurin as electron donor. Essential for growth and survival in oxygen-depleted environments. Can also provide protection against killing by normal human sera. This chain is Copper-containing nitrite reductase (aniA), found in Neisseria gonorrhoeae.